A 390-amino-acid chain; its full sequence is Phosphopentomutase (390 aa).

Positions 10, 284, 289, 325, 326, and 337 each coordinate Mn(2+).

This sequence belongs to the phosphopentomutase family. Requires Mn(2+) as cofactor.

The protein localises to the cytoplasm. The enzyme catalyses 2-deoxy-alpha-D-ribose 1-phosphate = 2-deoxy-D-ribose 5-phosphate. It carries out the reaction alpha-D-ribose 1-phosphate = D-ribose 5-phosphate. It participates in carbohydrate degradation; 2-deoxy-D-ribose 1-phosphate degradation; D-glyceraldehyde 3-phosphate and acetaldehyde from 2-deoxy-alpha-D-ribose 1-phosphate: step 1/2. Functionally, isomerase that catalyzes the conversion of deoxy-ribose 1-phosphate (dRib-1-P) and ribose 1-phosphate (Rib-1-P) to deoxy-ribose 5-phosphate (dRib-5-P) and ribose 5-phosphate (Rib-5-P), respectively. The polypeptide is Phosphopentomutase (Clostridioides difficile (strain 630) (Peptoclostridium difficile)).